We begin with the raw amino-acid sequence, 201 residues long: Ribonuclease HII (201 aa).

The 191-residue stretch at 10-200 folds into the RNase H type-2 domain; that stretch reads LIEAGCDEAG…LGTDPQLEIP (191 aa). Positions 16, 17, and 108 each coordinate a divalent metal cation.

It belongs to the RNase HII family. Requires Mn(2+) as cofactor. It depends on Mg(2+) as a cofactor.

The protein localises to the cytoplasm. The enzyme catalyses Endonucleolytic cleavage to 5'-phosphomonoester.. Endonuclease that specifically degrades the RNA of RNA-DNA hybrids. This Phocaeicola vulgatus (strain ATCC 8482 / DSM 1447 / JCM 5826 / CCUG 4940 / NBRC 14291 / NCTC 11154) (Bacteroides vulgatus) protein is Ribonuclease HII.